The sequence spans 528 residues: Importin subunit alpha-2 (528 aa).

The span at 1 to 15 (MADDSASPSPSSASP) shows a compositional bias: low complexity. Positions 1-36 (MADDSASPSPSSASPLQHHREALKSSVRNTAASRRR) are disordered. ARM repeat units lie at residues 125-165 (VPLV…NIAA), 167-206 (EPEETKSLLPALPLLIAHLGEKSSTLVAEQCAWAIGNVAG), 209-248 (AELRSTLLAQGALRPLTRLMFSSKGSTARTAAWAMSNLIK), 253-292 (KAANELITIDGVLNAIIASLEKEDEELATEVAWVVVYLSA), 294-335 (SDRG…NLIA), 338-383 (DYMV…NIAA), 386-425 (FEHKKLIFASEATPVLIRLVTSMQFDIRREAAYTLGNLCV), and 438-477 (VEHLVAIVDGGALPGFIHLVRSADVDTAGLGLQFLELVMR).

This sequence belongs to the importin alpha family. Forms a complex with importin subunit beta-1. The whole complex, most stable and composed of importin alpha, importin beta and NLS substrate, is referred to as PTAC or pore targeting complex. In terms of tissue distribution, expressed in root, callus, and etiolated leaf. Low expression in green leaf.

The protein resides in the cytoplasm. It is found in the perinuclear region. In terms of biological role, binds specifically and directly to substrates containing either a simple or bipartite NLS motif. Promotes docking of import substrates to the nuclear envelope. This is Importin subunit alpha-2 from Oryza sativa subsp. japonica (Rice).